We begin with the raw amino-acid sequence, 449 residues long: Tubulin alpha-1C chain (449 aa).

Positions 1-4 (MREC) match the MREC motif motif. Residue Q11 coordinates GTP. At K40 the chain carries N6-acetyllysine. The GTP site is built by E71, S140, G144, T145, T179, N206, and N228. Position 71 (E71) interacts with Mg(2+). Residue E254 is part of the active site. Y282 carries the post-translational modification 3'-nitrotyrosine. A Phosphotyrosine modification is found at Y432. Phosphoserine is present on S439. Y449 is modified (3'-nitrotyrosine).

The protein belongs to the tubulin family. In terms of assembly, dimer of alpha and beta chains. A typical microtubule is a hollow water-filled tube with an outer diameter of 25 nm and an inner diameter of 15 nM. Alpha-beta heterodimers associate head-to-tail to form protofilaments running lengthwise along the microtubule wall with the beta-tubulin subunit facing the microtubule plus end conferring a structural polarity. Microtubules usually have 13 protofilaments but different protofilament numbers can be found in some organisms and specialized cells. Mg(2+) serves as cofactor. Some glutamate residues at the C-terminus are polyglycylated, resulting in polyglycine chains on the gamma-carboxyl group. Glycylation is mainly limited to tubulin incorporated into axonemes (cilia and flagella) whereas glutamylation is prevalent in neuronal cells, centrioles, axonemes, and the mitotic spindle. Both modifications can coexist on the same protein on adjacent residues, and lowering polyglycylation levels increases polyglutamylation, and reciprocally. Cilia and flagella glycylation is required for their stability and maintenance. Flagella glycylation controls sperm motility. Post-translationally, some glutamate residues at the C-terminus are polyglutamylated, resulting in polyglutamate chains on the gamma-carboxyl group. Polyglutamylation plays a key role in microtubule severing by spastin (SPAST). SPAST preferentially recognizes and acts on microtubules decorated with short polyglutamate tails: severing activity by SPAST increases as the number of glutamates per tubulin rises from one to eight, but decreases beyond this glutamylation threshold. Glutamylation is also involved in cilia motility. In terms of processing, acetylation of alpha chains at Lys-40 is located inside the microtubule lumen. This modification has been correlated with increased microtubule stability, intracellular transport and ciliary assembly. Methylation of alpha chains at Lys-40 is found in mitotic microtubules and is required for normal mitosis and cytokinesis contributing to genomic stability. Post-translationally, nitration of Tyr-449 is irreversible and interferes with normal dynein intracellular distribution. In terms of processing, undergoes a tyrosination/detyrosination cycle, the cyclic removal and re-addition of a C-terminal tyrosine residue by the enzymes tubulin tyrosine carboxypeptidase (MATCAP1, VASH1 or VASH2) and tubulin tyrosine ligase (TTL), respectively. Tyrosination promotes microtubule interaction with CAP-Gly domain-containing proteins such as CLIP1, CLIP2 and DCTN1. Tyrosination regulates the initiation of dynein-dynactin motility via interaction with DCTN1, which brings the dynein-dynactin complex into contact with microtubules. In neurons, tyrosinated tubulins mediate the initiation of retrograde vesicle transport. Post-translationally, detyrosination is involved in metaphase plate congression by guiding chromosomes during mitosis: detyrosination promotes interaction with CENPE, promoting pole-proximal transport of chromosomes toward the equator. Detyrosination increases microtubules-dependent mechanotransduction in dystrophic cardiac and skeletal muscle. In cardiomyocytes, detyrosinated microtubules are required to resist to contractile compression during contraction: detyrosination promotes association with desmin (DES) at force-generating sarcomeres, leading to buckled microtubules and mechanical resistance to contraction. As to expression, minor alpha-tubulin expressed in all tissues.

The protein resides in the cytoplasm. It is found in the cytoskeleton. It catalyses the reaction GTP + H2O = GDP + phosphate + H(+). Functionally, tubulin is the major constituent of microtubules, a cylinder consisting of laterally associated linear protofilaments composed of alpha- and beta-tubulin heterodimers. Microtubules grow by the addition of GTP-tubulin dimers to the microtubule end, where a stabilizing cap forms. Below the cap, tubulin dimers are in GDP-bound state, owing to GTPase activity of alpha-tubulin. This Mus musculus (Mouse) protein is Tubulin alpha-1C chain (Tuba1c).